Here is a 486-residue protein sequence, read N- to C-terminus: Ribulose bisphosphate carboxylase large chain, plasmid (486 aa).

Residues asparagine 126 and threonine 176 each coordinate substrate. Catalysis depends on lysine 178, which acts as the Proton acceptor. A substrate-binding site is contributed by lysine 180. The Mg(2+) site is built by lysine 204, aspartate 206, and glutamate 207. Residue lysine 204 is modified to N6-carboxylysine. The Proton acceptor role is filled by histidine 296. Substrate-binding residues include arginine 297, histidine 329, and serine 381.

Belongs to the RuBisCO large chain family. Type I subfamily. Heterohexadecamer of 8 large chains and 8 small chains. It depends on Mg(2+) as a cofactor.

It carries out the reaction 2 (2R)-3-phosphoglycerate + 2 H(+) = D-ribulose 1,5-bisphosphate + CO2 + H2O. The enzyme catalyses D-ribulose 1,5-bisphosphate + O2 = 2-phosphoglycolate + (2R)-3-phosphoglycerate + 2 H(+). In terms of biological role, ruBisCO catalyzes two reactions: the carboxylation of D-ribulose 1,5-bisphosphate, the primary event in carbon dioxide fixation, as well as the oxidative fragmentation of the pentose substrate. Both reactions occur simultaneously and in competition at the same active site. The sequence is that of Ribulose bisphosphate carboxylase large chain, plasmid (cbbL2) from Cupriavidus necator (strain ATCC 17699 / DSM 428 / KCTC 22496 / NCIMB 10442 / H16 / Stanier 337) (Ralstonia eutropha).